We begin with the raw amino-acid sequence, 187 residues long: tRNA (cytidine(56)-2'-O)-methyltransferase (187 aa).

Residues Leu-94 and Gly-120–Val-124 each bind S-adenosyl-L-methionine.

It belongs to the aTrm56 family. As to quaternary structure, homodimer.

Its subcellular location is the cytoplasm. The enzyme catalyses cytidine(56) in tRNA + S-adenosyl-L-methionine = 2'-O-methylcytidine(56) in tRNA + S-adenosyl-L-homocysteine + H(+). Its function is as follows. Specifically catalyzes the AdoMet-dependent 2'-O-ribose methylation of cytidine at position 56 in tRNAs. This Hyperthermus butylicus (strain DSM 5456 / JCM 9403 / PLM1-5) protein is tRNA (cytidine(56)-2'-O)-methyltransferase.